A 263-amino-acid chain; its full sequence is Tryptophan 2,3-dioxygenase (263 aa).

Residues 32-36 (FIVIH), Y94, and R98 contribute to the substrate site. H221 serves as a coordination point for heme. T235 is a binding site for substrate.

This sequence belongs to the tryptophan 2,3-dioxygenase family. Homotetramer. Heme serves as cofactor.

It catalyses the reaction L-tryptophan + O2 = N-formyl-L-kynurenine. Its pathway is amino-acid degradation; L-tryptophan degradation via kynurenine pathway; L-kynurenine from L-tryptophan: step 1/2. Functionally, heme-dependent dioxygenase that catalyzes the oxidative cleavage of the L-tryptophan (L-Trp) pyrrole ring and converts L-tryptophan to N-formyl-L-kynurenine. Catalyzes the oxidative cleavage of the indole moiety. The protein is Tryptophan 2,3-dioxygenase of Caulobacter vibrioides (strain ATCC 19089 / CIP 103742 / CB 15) (Caulobacter crescentus).